We begin with the raw amino-acid sequence, 507 residues long: Probable aldehyde dehydrogenase (507 aa).

Residue 219–225 (GFGAEAG) participates in NAD(+) binding. Catalysis depends on residues Glu263 and Cys302.

Belongs to the aldehyde dehydrogenase family.

It carries out the reaction an aldehyde + NAD(+) + H2O = a carboxylate + NADH + 2 H(+). The sequence is that of Probable aldehyde dehydrogenase from Mycobacterium bovis (strain ATCC BAA-935 / AF2122/97).